A 1018-amino-acid polypeptide reads, in one-letter code: Fibronectin-binding protein A (1018 aa).

An N-terminal signal peptide occupies residues methionine 1–alanine 36. The YSIRK-G/S signaling motif motif lies at tyrosine 7 to serine 18. Residues alanine 37 to asparagine 511 are ligand-binding A region. 2 disordered regions span residues serine 38–glutamine 61 and alanine 78–threonine 195. 2 stretches are compositionally biased toward polar residues: residues glutamate 39–glutamine 61 and alanine 78–threonine 92. Residues threonine 112 to valine 126 are compositionally biased toward basic and acidic residues. Residues threonine 129–glutamine 139 are compositionally biased toward polar residues. The tract at residues glycine 194–asparagine 511 is fibrinogen/elastin/tropoelastin-binding. Residues glycine 512–threonine 872 form a fibronectin-binding region. The stretch at glutamate 545–isoleucine 574 is one B-1 repeat. The interval glutamate 545–serine 604 is 2 X approximate tandem repeats. The B-2 repeat unit spans residues glutamate 575 to serine 604. 3 disordered regions span residues glycine 595–histidine 622, leucine 740–phenylalanine 813, and glutamate 827–phenylalanine 997. The D-1 repeat unit spans residues glycine 745–histidine 782. The 4 X approximate tandem repeats, D-3 repeat has more fibronectin-binding activity stretch occupies residues glycine 745 to proline 878. Residues glycine 783–histidine 820 form a D-2 repeat. The D-3 repeat unit spans residues glycine 821 to serine 859. The span at glutamate 827–proline 838 shows a compositional bias: basic and acidic residues. The D-4; truncated repeat unit spans residues glycine 860–proline 878. Positions proline 875–proline 938 are enriched in pro residues. WR repeat units lie at residues proline 879–threonine 892, proline 893–threonine 906, proline 907–threonine 920, proline 921–lysine 934, and proline 935–lysine 948. Residues proline 879–lysine 948 form a 5 X tandem repeats, Pro-rich (WR) region. Positions leucine 982 to glycine 986 match the LPXTG sorting signal motif. Pentaglycyl murein peptidoglycan amidated threonine is present on threonine 985. Positions glycine 986–alanine 1018 are cleaved as a propeptide — removed by sortase.

The protein resides in the secreted. The protein localises to the cell wall. Its function is as follows. Possesses multiple, substituting fibronectin (Fn) binding regions, each capable of conferring adherence to both soluble and immobilized forms of Fn. This confers to S.aureus the ability to invade endothelial cells both in vivo and in vitro, without requiring additional factors, although in a slow and inefficient way through actin rearrangements in host cells. This invasion process is mediated by integrin alpha-5/beta-1. Promotes bacterial attachment to both soluble and immobilized forms of fibrinogen (Fg) by means of a unique binding site localized within the 17 C-terminal residues of the gamma-chain of human Fg. Both plasma proteins (Fn and Fg) function as a bridge between bacterium and host cell. Promotes attachment to immobilized elastin peptides in a dose-dependent and saturable manner. Promotes attachment to both full-length and segments of immobilized human tropoelastin at multiple sites in a dose and pH-dependent manner. Promotes adherence to and aggregation of activated platelets independently of other S.aureus surface molecules. Is a critical mediator implicated in the induction of experimental endocarditis in rats with catheter-induced aortic vegetations, promoting both colonization and persistence of the bacterium into the host. The polypeptide is Fibronectin-binding protein A (fnbA) (Staphylococcus aureus (strain NCTC 8325 / PS 47)).